The primary structure comprises 63 residues: Large ribosomal subunit protein uL30 (63 aa).

This sequence belongs to the universal ribosomal protein uL30 family. Part of the 50S ribosomal subunit.

This Rickettsia africae (strain ESF-5) protein is Large ribosomal subunit protein uL30.